Consider the following 514-residue polypeptide: Thymus-specific serine protease (514 aa).

The first 24 residues, 1-24 (MAVWLAQWLGPLLLVSLWGLLAPA), serve as a signal peptide directing secretion. N-linked (GlcNAc...) asparagine glycosylation is found at N70 and N172. S185 (charge relay system) is an active-site residue. An N-linked (GlcNAc...) asparagine glycan is attached at N321. Residues D447 and H472 each act as charge relay system in the active site.

It belongs to the peptidase S28 family. In terms of tissue distribution, expressed predominantly in cortical thymic epithelial cells.

The protein resides in the cytoplasmic vesicle. Its function is as follows. Protease that may play a role in T-cell development. The protein is Thymus-specific serine protease (PRSS16) of Homo sapiens (Human).